We begin with the raw amino-acid sequence, 138 residues long: Protein PsiE homolog (138 aa).

Transmembrane regions (helical) follow at residues 14-34 (LQAL…GLLI), 56-76 (YEML…ALII), 84-104 (HFPL…LIII), and 109-129 (AIST…FFIV).

Belongs to the PsiE family.

Its subcellular location is the cell membrane. The chain is Protein PsiE homolog from Bacillus velezensis (strain DSM 23117 / BGSC 10A6 / LMG 26770 / FZB42) (Bacillus amyloliquefaciens subsp. plantarum).